A 540-amino-acid polypeptide reads, in one-letter code: Acetyl-coenzyme A carboxylase carboxyl transferase subunit beta, chloroplastic (540 aa).

The disordered stretch occupies residues Tyr229 to Tyr249. Residues Gly233–Ser248 show a composition bias toward low complexity. The CoA carboxyltransferase N-terminal domain occupies Leu267 to Val538. Zn(2+) contacts are provided by Cys271, Cys274, Cys290, and Cys293. A C4-type zinc finger spans residues Cys271–Cys293.

It belongs to the AccD/PCCB family. In terms of assembly, acetyl-CoA carboxylase is a heterohexamer composed of biotin carboxyl carrier protein, biotin carboxylase and 2 subunits each of ACCase subunit alpha and ACCase plastid-coded subunit beta (accD). The cofactor is Zn(2+).

Its subcellular location is the plastid. It localises to the chloroplast stroma. The catalysed reaction is N(6)-carboxybiotinyl-L-lysyl-[protein] + acetyl-CoA = N(6)-biotinyl-L-lysyl-[protein] + malonyl-CoA. It participates in lipid metabolism; malonyl-CoA biosynthesis; malonyl-CoA from acetyl-CoA: step 1/1. Component of the acetyl coenzyme A carboxylase (ACC) complex. Biotin carboxylase (BC) catalyzes the carboxylation of biotin on its carrier protein (BCCP) and then the CO(2) group is transferred by the transcarboxylase to acetyl-CoA to form malonyl-CoA. This is Acetyl-coenzyme A carboxylase carboxyl transferase subunit beta, chloroplastic from Amborella trichopoda.